Reading from the N-terminus, the 991-residue chain is Translation initiation factor IF-2 (991 aa).

Disordered stretches follow at residues 126-220 and 325-359; these read QADH…DVGE and VKAA…VDEK. 2 stretches are compositionally biased toward polar residues: residues 138-160 and 201-210; these read QTES…TEPA and PAAQTESAVQ. Residues 326-340 are compositionally biased toward low complexity; that stretch reads KAAGDGDTAPAADDA. Residues 343 to 353 are compositionally biased toward basic residues; it reads GKKKPGKKKKK. The 171-residue stretch at 488 to 658 folds into the tr-type G domain; sequence IRPPVVTIMG…LTEAEIRELK (171 aa). The tract at residues 497–504 is G1; it reads GHVDHGKT. Residue 497–504 coordinates GTP; sequence GHVDHGKT. The interval 522–526 is G2; sequence GITQH. A G3 region spans residues 544–547; the sequence is DTPG. GTP is bound by residues 544–548 and 598–601; these read DTPGH and NKID. The tract at residues 598–601 is G4; that stretch reads NKID. A G5 region spans residues 634 to 636; it reads SAK.

This sequence belongs to the TRAFAC class translation factor GTPase superfamily. Classic translation factor GTPase family. IF-2 subfamily.

It is found in the cytoplasm. Its function is as follows. One of the essential components for the initiation of protein synthesis. Protects formylmethionyl-tRNA from spontaneous hydrolysis and promotes its binding to the 30S ribosomal subunits. Also involved in the hydrolysis of GTP during the formation of the 70S ribosomal complex. This chain is Translation initiation factor IF-2, found in Chlorobium phaeobacteroides (strain DSM 266 / SMG 266 / 2430).